A 640-amino-acid polypeptide reads, in one-letter code: Envelope glycoprotein (640 aa).

The signal sequence occupies residues 1 to 32 (MEGPAFSKPLKDKINPWGPLIILGILIRAGVS). The Extracellular segment spans residues 33–582 (VQHDSPHQVF…FNKSPWFTTL (550 aa)). Asparagine 43 and asparagine 58 each carry an N-linked (GlcNAc...) asparagine; by host glycan. 2 cysteine pairs are disulfide-bonded: cysteine 109–cysteine 126 and cysteine 118–cysteine 131. A glycan (N-linked (GlcNAc...) asparagine; by host) is linked at asparagine 297. 6 disulfides stabilise this stretch: cysteine 307-cysteine 310, cysteine 307-cysteine 535, cysteine 337-cysteine 391, cysteine 356-cysteine 368, cysteine 398-cysteine 411, and cysteine 527-cysteine 534. Positions 307–310 (CWLC) match the CXXC motif. Asparagine 329 and asparagine 336 each carry an N-linked (GlcNAc...) asparagine; by host glycan. N-linked (GlcNAc...) asparagine; by host glycosylation occurs at asparagine 369. A fusion peptide region spans residues 444–464 (VSLTLALLLGGLTMGGIAAGV). The stretch at 473–509 (ATQQFQQLQAAMHDDLKEVEKSITNLEKSLTSLSEVV) forms a coiled coil. The segment at 510 to 526 (LQNRRGLDLLFLKEGGL) is immunosuppression. Positions 527–535 (CAALKEECC) match the CX6CC motif. Residues 583-603 (ISTIMGPLIILLLILLFGPWI) form a helical membrane-spanning segment. The Cytoplasmic portion of the chain corresponds to 604-640 (LNRLVQFIKDRISVVQALVLTQQYHQLKTIGDCKSRE). Positions 627–630 (YHQL) match the YXXL motif; contains endocytosis signal motif.

The mature envelope protein (Env) consists of a trimer of SU-TM heterodimers attached by a labile interchain disulfide bond. Post-translationally, specific enzymatic cleavages in vivo yield mature proteins. Envelope glycoproteins are synthesized as an inactive precursor that is N-glycosylated and processed likely by host cell furin or by a furin-like protease in the Golgi to yield the mature SU and TM proteins. The cleavage site between SU and TM requires the minimal sequence [KR]-X-[KR]-R. The R-peptide is released from the C-terminus of the cytoplasmic tail of the TM protein upon particle formation as a result of proteolytic cleavage by the viral protease. Cleavage of this peptide is required for TM to become fusogenic. The CXXC motif is highly conserved across a broad range of retroviral envelope proteins. It is thought to participate in the formation of a labile disulfide bond possibly with the CX6CC motif present in the transmembrane protein. Isomerization of the intersubunit disulfide bond to an SU intrachain disulfide bond is thought to occur upon receptor recognition in order to allow membrane fusion. In terms of processing, the R-peptide is palmitoylated.

It is found in the virion membrane. The protein resides in the host cell membrane. In terms of biological role, the surface protein (SU) attaches the virus to the host cell by binding to its receptor. This interaction triggers the refolding of the transmembrane protein (TM) and is thought to activate its fusogenic potential by unmasking its fusion peptide. Fusion occurs at the host cell plasma membrane. Functionally, the transmembrane protein (TM) acts as a class I viral fusion protein. Under the current model, the protein has at least 3 conformational states: pre-fusion native state, pre-hairpin intermediate state, and post-fusion hairpin state. During viral and target cell membrane fusion, the coiled coil regions (heptad repeats) assume a trimer-of-hairpins structure, positioning the fusion peptide in close proximity to the C-terminal region of the ectodomain. The formation of this structure appears to drive apposition and subsequent fusion of viral and target cell membranes. Membranes fusion leads to delivery of the nucleocapsid into the cytoplasm. The polypeptide is Envelope glycoprotein (env) (Mus musculus (Mouse)).